A 582-amino-acid chain; its full sequence is TRAF-type zinc finger domain-containing protein 1 (582 aa).

Alanine 2 carries the post-translational modification N-acetylalanine. The TRAF-type zinc finger occupies 27–103; that stretch reads IHEIHCQRNI…DLELSILKLK (77 aa). The residue at position 191 (serine 191) is a Phosphoserine. A disordered region spans residues 217–236; that stretch reads EQERQERNRGQQPPKEGGEE. Serine 278, serine 320, serine 326, serine 327, serine 409, serine 415, serine 430, and serine 470 each carry phosphoserine. Residues 401–582 are disordered; the sequence is TEGIPRLDSQ…AGDAEEEEEE (182 aa). Composition is skewed to polar residues over residues 454-471 and 486-495; these read PINNMTATYNQLSRSTSG and LSNSDSQDIQ.

Interacts with MAVS, TICAM1, TRAF1, TRAF2, TRAF3. Interacts with TRAF6.

In terms of biological role, negative feedback regulator that controls excessive innate immune responses. Regulates both Toll-like receptor 4 (TLR4) and DDX58/RIG1-like helicases (RLH) pathways. May inhibit the LTR pathway by direct interaction with TRAF6 and attenuation of NF-kappa-B activation. May negatively regulate the RLH pathway downstream from MAVS and upstream of NF-kappa-B and IRF3. The sequence is that of TRAF-type zinc finger domain-containing protein 1 (TRAFD1) from Homo sapiens (Human).